The primary structure comprises 1470 residues: Gag-Pol polyprotein (1470 aa).

Glycine 2 carries the N-myristoyl glycine; by host lipid modification. A Nuclear export signal motif is present at residues 16 to 22 (FEHIRLR). The Nuclear localization signal signature appears at 26–32 (KKKYQIK). The segment at 117 to 144 (AVTPPGGQQKNNTGGTATPGGSQNFPAQ) is disordered. A compositionally biased stretch (polar residues) spans 122–144 (GGQQKNNTGGTATPGGSQNFPAQ). CCHC-type zinc fingers lie at residues 398-415 (PKCY…QCPE) and 419-436 (IKCL…DCRG). Residues 479–504 (KEAPAAVCRERETNEKSEQKPPSEQS) form a disordered region. Residues 486 to 504 (CRERETNEKSEQKPPSEQS) show a composition bias toward basic and acidic residues. The Peptidase A2 domain occupies 531–602 (VKALLDTGAD…TPINIIGRNF (72 aa)). The active-site For protease activity; shared with dimeric partner is aspartate 536. One can recognise a Reverse transcriptase domain in the interval 658-848 (EGKLSRVGGD…PPFEWMGYKL (191 aa)). Residues aspartate 724, aspartate 799, and aspartate 800 each contribute to the Mg(2+) site. The segment at 841 to 849 (FEWMGYKLW) is RT 'primer grip'. The Tryptophan repeat motif signature appears at 1011-1027 (WEQWWADYWQVSWIPEW). Residues 1047–1170 (IPGEDVYYVD…IDKLVSKGVR (124 aa)) form the RNase H type-1 domain. The Mg(2+) site is built by aspartate 1056, glutamate 1091, aspartate 1111, and aspartate 1162. The segment at 1176–1217 (GRIEEAQEEHDRYHSNWRNLADTFGLPQIVAKEIVAMCPKCQ) adopts an Integrase-type zinc-finger fold. Residues histidine 1185, histidine 1189, cysteine 1213, and cysteine 1216 each coordinate Zn(2+). In terms of domain architecture, Integrase catalytic spans 1227 to 1377 (VDASPGVWQM…TAAERLINMI (151 aa)). The Mg(2+) site is built by aspartate 1237 and aspartate 1289. A DNA-binding region (integrase-type) is located at residues 1396-1443 (FRVYYREGRDPVWKGPARLIWKGEGAVVLKEGEELKVVPRRKAKIIKD). The disordered stretch occupies residues 1451 to 1470 (GDETHLEGAGGSDHQMAGDS).

Homotrimer. Interacts with gp41 (via C-terminus). As to quaternary structure, homodimer. The active site consists of two apposed aspartic acid residues. In terms of assembly, heterodimer of p66 RT and p51 RT (RT p66/p51). Heterodimerization of RT is essential for DNA polymerase activity. Despite the sequence identities, p66 RT and p51 RT have distinct folding. Homotetramer; may further associate as a homohexadecamer. Requires Mg(2+) as cofactor. Post-translationally, specific enzymatic cleavages by the viral protease yield mature proteins. The protease is released by autocatalytic cleavage. The polyprotein is cleaved during and after budding, this process is termed maturation. Proteolytic cleavage of p66 RT removes the RNase H domain to yield the p51 RT subunit. Capsid protein p24 is phosphorylated.

It localises to the virion. The protein localises to the host nucleus. Its subcellular location is the host cytoplasm. It is found in the host cell membrane. The catalysed reaction is Specific for a P1 residue that is hydrophobic, and P1' variable, but often Pro.. The enzyme catalyses Endohydrolysis of RNA in RNA/DNA hybrids. Three different cleavage modes: 1. sequence-specific internal cleavage of RNA. Human immunodeficiency virus type 1 and Moloney murine leukemia virus enzymes prefer to cleave the RNA strand one nucleotide away from the RNA-DNA junction. 2. RNA 5'-end directed cleavage 13-19 nucleotides from the RNA end. 3. DNA 3'-end directed cleavage 15-20 nucleotides away from the primer terminus.. It carries out the reaction 3'-end directed exonucleolytic cleavage of viral RNA-DNA hybrid.. It catalyses the reaction DNA(n) + a 2'-deoxyribonucleoside 5'-triphosphate = DNA(n+1) + diphosphate. Its activity is regulated as follows. The viral protease is inhibited by many synthetic protease inhibitors (PIs), such as amprenavir, atazanavir, indinavir, loprinavir, nelfinavir, ritonavir and saquinavir. RT can be inhibited either by nucleoside RT inhibitors (NRTIs) or by non nucleoside RT inhibitors (NNRTIs). NRTIs act as chain terminators, whereas NNRTIs inhibit DNA polymerization by binding a small hydrophobic pocket near the RT active site and inducing an allosteric change in this region. Classical NRTIs are abacavir, adefovir (PMEA), didanosine (ddI), lamivudine (3TC), stavudine (d4T), tenofovir (PMPA), zalcitabine (ddC), and zidovudine (AZT). Classical NNRTIs are atevirdine (BHAP U-87201E), delavirdine, efavirenz (DMP-266), emivirine (I-EBU), and nevirapine (BI-RG-587). The tritherapies used as a basic effective treatment of AIDS associate two NRTIs and one NNRTI. Use of protease inhibitors in tritherapy regimens permit more ambitious therapeutic strategies. Functionally, gag-Pol polyprotein and Gag polyprotein may regulate their own translation, by the binding genomic RNA in the 5'-UTR. At low concentration, Gag-Pol and Gag would promote translation, whereas at high concentration, the polyproteins encapsidate genomic RNA and then shut off translation. Matrix protein p17 has two main functions: in infected cell, it targets Gag and Gag-pol polyproteins to the plasma membrane via a multipartite membrane-binding signal, that includes its myristointegration complex. The myristoylation signal and the NLS exert conflicting influences its subcellular localization. The key regulation of these motifs might be phosphorylation of a portion of MA molecules on the C-terminal tyrosine at the time of virus maturation, by virion-associated cellular tyrosine kinase. Implicated in the release from host cell mediated by Vpu. Its function is as follows. Capsid protein p24 forms the conical core that encapsulates the genomic RNA-nucleocapsid complex in the virion. The core is constituted by capsid protein hexamer subunits. The core is disassembled soon after virion entry. Interaction with host PPIA/CYPA protects the virus from restriction by host TRIM5-alpha and from an unknown antiviral activity in host cells. This capsid restriction by TRIM5 is one of the factors which restricts SIV to the simian species. In terms of biological role, nucleocapsid protein p7 encapsulates and protects viral dimeric unspliced (genomic) RNA. Binds these RNAs through its zinc fingers. Facilitates rearangement of nucleic acid secondary structure during retrotranscription of genomic RNA. This capability is referred to as nucleic acid chaperone activity. Functionally, the aspartyl protease mediates proteolytic cleavages of Gag and Gag-Pol polyproteins during or shortly after the release of the virion from the plasma membrane. Cleavages take place as an ordered, step-wise cascade to yield mature proteins. This process is called maturation. Displays maximal activity during the budding process just prior to particle release from the cell. Also cleaves Nef and Vif, probably concomitantly with viral structural proteins on maturation of virus particles. Hydrolyzes host EIF4GI and PABP1 in order to shut off the capped cellular mRNA translation. The resulting inhibition of cellular protein synthesis serves to ensure maximal viral gene expression and to evade host immune response. Reverse transcriptase/ribonuclease H (RT) is a multifunctional enzyme that converts the viral dimeric RNA genome into dsDNA in the cytoplasm, shortly after virus entry into the cell. This enzyme displays a DNA polymerase activity that can copy either DNA or RNA templates, and a ribonuclease H (RNase H) activity that cleaves the RNA strand of RNA-DNA heteroduplexes in a partially processive 3' to 5' endonucleasic mode. Conversion of viral genomic RNA into dsDNA requires many steps. A tRNA binds to the primer-binding site (PBS) situated at the 5'-end of the viral RNA. RT uses the 3' end of the tRNA primer to perform a short round of RNA-dependent minus-strand DNA synthesis. The reading proceeds through the U5 region and ends after the repeated (R) region which is present at both ends of viral RNA. The portion of the RNA-DNA heteroduplex is digested by the RNase H, resulting in a ssDNA product attached to the tRNA primer. This ssDNA/tRNA hybridizes with the identical R region situated at the 3' end of viral RNA. This template exchange, known as minus-strand DNA strong stop transfer, can be either intra- or intermolecular. RT uses the 3' end of this newly synthesized short ssDNA to perform the RNA-dependent minus-strand DNA synthesis of the whole template. RNase H digests the RNA template except for two polypurine tracts (PPTs) situated at the 5'-end and near the center of the genome. It is not clear if both polymerase and RNase H activities are simultaneous. RNase H can probably proceed both in a polymerase-dependent (RNA cut into small fragments by the same RT performing DNA synthesis) and a polymerase-independent mode (cleavage of remaining RNA fragments by free RTs). Secondly, RT performs DNA-directed plus-strand DNA synthesis using the PPTs that have not been removed by RNase H as primers. PPTs and tRNA primers are then removed by RNase H. The 3' and 5' ssDNA PBS regions hybridize to form a circular dsDNA intermediate. Strand displacement synthesis by RT to the PBS and PPT ends produces a blunt ended, linear dsDNA copy of the viral genome that includes long terminal repeats (LTRs) at both ends. Its function is as follows. Integrase catalyzes viral DNA integration into the host chromosome, by performing a series of DNA cutting and joining reactions. This enzyme activity takes place after virion entry into a cell and reverse transcription of the RNA genome in dsDNA. The first step in the integration process is 3' processing. This step requires a complex comprising the viral genome, matrix protein, Vpr and integrase. This complex is called the pre-integration complex (PIC). The integrase protein removes 2 nucleotides from each 3' end of the viral DNA, leaving recessed CA OH's at the 3' ends. In the second step, the PIC enters cell nucleus. This process is mediated through integrase and Vpr proteins, and allows the virus to infect a non dividing cell. This ability to enter the nucleus is specific of lentiviruses, other retroviruses cannot and rely on cell division to access cell chromosomes. In the third step, termed strand transfer, the integrase protein joins the previously processed 3' ends to the 5' ends of strands of target cellular DNA at the site of integration. The 5'-ends are produced by integrase-catalyzed staggered cuts, 5 bp apart. A Y-shaped, gapped, recombination intermediate results, with the 5'-ends of the viral DNA strands and the 3' ends of target DNA strands remaining unjoined, flanking a gap of 5 bp. The last step is viral DNA integration into host chromosome. This involves host DNA repair synthesis in which the 5 bp gaps between the unjoined strands are filled in and then ligated. Since this process occurs at both cuts flanking the SIV genome, a 5 bp duplication of host DNA is produced at the ends of SIV integration. Alternatively, Integrase may catalyze the excision of viral DNA just after strand transfer, this is termed disintegration. This chain is Gag-Pol polyprotein (gag-pol), found in Cercopithecidae (Old World monkeys).